A 378-amino-acid polypeptide reads, in one-letter code: Erythronate-4-phosphate dehydrogenase (378 aa).

Positions 45 and 66 each coordinate substrate. Residues Asp146 and Thr175 each contribute to the NAD(+) site. Residue Arg208 is part of the active site. NAD(+) is bound at residue Asp232. Glu237 is a catalytic residue. His254 serves as the catalytic Proton donor. Residue Gly257 participates in NAD(+) binding. Substrate is bound at residue Tyr258.

Belongs to the D-isomer specific 2-hydroxyacid dehydrogenase family. PdxB subfamily. In terms of assembly, homodimer.

It localises to the cytoplasm. The catalysed reaction is 4-phospho-D-erythronate + NAD(+) = (R)-3-hydroxy-2-oxo-4-phosphooxybutanoate + NADH + H(+). It participates in cofactor biosynthesis; pyridoxine 5'-phosphate biosynthesis; pyridoxine 5'-phosphate from D-erythrose 4-phosphate: step 2/5. Functionally, catalyzes the oxidation of erythronate-4-phosphate to 3-hydroxy-2-oxo-4-phosphonooxybutanoate. The protein is Erythronate-4-phosphate dehydrogenase of Salmonella dublin (strain CT_02021853).